Here is a 79-residue protein sequence, read N- to C-terminus: Large ribosomal subunit protein bL31 (79 aa).

Zn(2+) contacts are provided by Cys16, Cys18, Cys37, and Cys40.

This sequence belongs to the bacterial ribosomal protein bL31 family. Type A subfamily. As to quaternary structure, part of the 50S ribosomal subunit. The cofactor is Zn(2+).

Binds the 23S rRNA. This Coxiella burnetii (strain CbuG_Q212) (Coxiella burnetii (strain Q212)) protein is Large ribosomal subunit protein bL31.